Reading from the N-terminus, the 264-residue chain is Tritrans,polycis-undecaprenyl-diphosphate synthase (geranylgeranyl-diphosphate specific) (264 aa).

Residue aspartate 43 is part of the active site. Mg(2+) is bound at residue aspartate 43. Residues 44–47 (GNRR), tryptophan 48, histidine 60, and 88–90 (STE) contribute to the substrate site. Asparagine 91 serves as the catalytic Proton acceptor. Substrate-binding positions include phenylalanine 92, arginine 94, arginine 213, and 219-221 (RIS). Glutamate 232 contributes to the Mg(2+) binding site.

The protein belongs to the UPP synthase family. As to quaternary structure, homodimer. Mg(2+) is required as a cofactor.

It catalyses the reaction geranylgeranyl diphosphate + 7 isopentenyl diphosphate = tri-trans,hepta-cis-undecaprenyl diphosphate + 7 diphosphate. In terms of biological role, catalyzes the sequential condensation of isopentenyl diphosphate (IPP) with geranylgeranyl diphosphate (GGPP) to yield (2Z,6Z,10Z,14Z,18Z,22Z,26Z,30E,34E,38E)-undecaprenyl diphosphate (tritrans,heptacis-UPP). It is probably the precursor of glycosyl carrier lipids. In Pyrococcus horikoshii (strain ATCC 700860 / DSM 12428 / JCM 9974 / NBRC 100139 / OT-3), this protein is Tritrans,polycis-undecaprenyl-diphosphate synthase (geranylgeranyl-diphosphate specific).